A 993-amino-acid chain; its full sequence is Importin subunit beta-5 (993 aa).

In terms of domain architecture, Importin N-terminal spans 24–100 (AELGLRDLEK…RETLLHLLVS (77 aa)).

It is found in the nucleus. Required for nuclear protein import and mediates docking of import substrate to distinct nucleoporins. Serves a receptor for nuclear localization signals. Mediates the nuclear import of TATA-binding protein (TBP) and of histones H2A and H2B. The sequence is that of Importin subunit beta-5 (kap114) from Schizosaccharomyces pombe (strain 972 / ATCC 24843) (Fission yeast).